Reading from the N-terminus, the 411-residue chain is F-box/kelch-repeat protein At3g61590 (411 aa).

In terms of domain architecture, F-box spans Phe37 to Phe83. Kelch repeat units lie at residues Cys81–Gly135, Val137–Ser178, Ser196–Asn246, Met251–Leu299, Arg302–Glu350, and Phe352–Phe401.

In terms of assembly, part of a SCF (ASK-cullin-F-box) protein ligase complex. Interacts with SKP1A/ASK1, SKP1B/ASK2, ASK3, ASK9, ASK11, ASK12, ASK13, ASK14, ASK16 and ASK18.

The protein operates within protein modification; protein ubiquitination. Functionally, component of SCF(ASK-cullin-F-box) E3 ubiquitin ligase complexes, which may mediate the ubiquitination and subsequent proteasomal degradation of target proteins. The chain is F-box/kelch-repeat protein At3g61590 from Arabidopsis thaliana (Mouse-ear cress).